The following is a 439-amino-acid chain: Adenylosuccinate synthetase (439 aa).

GTP is bound by residues 12–18 (GDEGKGK) and 40–42 (GHT). Catalysis depends on aspartate 13, which acts as the Proton acceptor. Mg(2+) contacts are provided by aspartate 13 and glycine 40. IMP-binding positions include 13–16 (DEGK), 38–41 (NAGH), threonine 137, arginine 151, glutamine 232, threonine 247, and arginine 311. The active-site Proton donor is the histidine 41. Residue 307 to 313 (ATTGRPR) coordinates substrate. GTP-binding positions include arginine 313, 339–341 (KLD), and 421–423 (SNG).

It belongs to the adenylosuccinate synthetase family. Homodimer. It depends on Mg(2+) as a cofactor.

It localises to the cytoplasm. It carries out the reaction IMP + L-aspartate + GTP = N(6)-(1,2-dicarboxyethyl)-AMP + GDP + phosphate + 2 H(+). Its pathway is purine metabolism; AMP biosynthesis via de novo pathway; AMP from IMP: step 1/2. Functionally, plays an important role in the de novo pathway of purine nucleotide biosynthesis. Catalyzes the first committed step in the biosynthesis of AMP from IMP. This chain is Adenylosuccinate synthetase, found in Salinibacter ruber (strain DSM 13855 / M31).